A 99-amino-acid polypeptide reads, in one-letter code: Co-chaperonin GroES (99 aa).

Belongs to the GroES chaperonin family. As to quaternary structure, heptamer of 7 subunits arranged in a ring. Interacts with the chaperonin GroEL.

Its subcellular location is the cytoplasm. Its function is as follows. Together with the chaperonin GroEL, plays an essential role in assisting protein folding. The GroEL-GroES system forms a nano-cage that allows encapsulation of the non-native substrate proteins and provides a physical environment optimized to promote and accelerate protein folding. GroES binds to the apical surface of the GroEL ring, thereby capping the opening of the GroEL channel. The sequence is that of Co-chaperonin GroES from Corynebacterium efficiens (strain DSM 44549 / YS-314 / AJ 12310 / JCM 11189 / NBRC 100395).